The primary structure comprises 1782 residues: A-kinase anchor protein 12 (1782 aa).

Disordered stretches follow at residues 1–53 (MGAG…DPAT), 71–169 (QDEL…QAND), 189–400 (KTEK…APLA), 421–886 (VSTV…ELSE), 938–1089 (EREV…LKKE), 1105–1134 (PFTQ…ESSE), 1157–1274 (AIPP…ADEK), and 1305–1355 (KGEG…HVNE). The N-myristoyl glycine moiety is linked to residue glycine 2. Phosphoserine occurs at positions 11, 19, 28, 75, and 96. A compositionally biased stretch (low complexity) spans 16–53 (PEGSSTPAEPEPSGGGPSAEAAPDTTADPAIAASDPAT). Residues 108-125 (GQRDSEDVSKRDSDKEMA) are compositionally biased toward basic and acidic residues. Residues 145–154 (IIEQIPSSES) show a composition bias toward low complexity. At serine 154 the chain carries Phosphoserine. Residues 157–168 (EELTQPTESQAN) show a composition bias toward polar residues. Residues serine 219, serine 248, serine 258, serine 280, serine 283, serine 286, serine 347, and serine 371 each carry the phosphoserine modification. Basic and acidic residues predominate over residues 226 to 249 (ASKESEPKQSTEKPEETLKREQSH). The interval 266–557 (KEEGEEKQEK…TQVPADSPDS (292 aa)) is involved in PKC-binding. 2 stretches are compositionally biased toward basic and acidic residues: residues 315–347 (KPKE…EVAS) and 363–379 (ESAH…KVEL). Residue tyrosine 374 is modified to Phosphotyrosine. A phosphoserine mark is found at serine 381 and serine 392. Over residues 423-435 (TVEERTEEQKTEV) the composition is skewed to basic and acidic residues. Positions 446–456 (ELVEMDAEPQE) are enriched in acidic residues. Positions 458–468 (EPAKELVKLKE) are enriched in basic and acidic residues. 2 positions are modified to phosphoserine: serine 483 and serine 505. Residues 528–537 (LSGKKQKGKR) are compositionally biased toward basic residues. Phosphoserine is present on residues serine 554, serine 557, serine 598, serine 612, serine 627, and serine 629. The short motif at 607-627 (VTPWASFKKMVTPKKRVRRPS) is the AKAP CaM-binding 1 element. Residues 625–639 (RPSESDKEDELDKVK) show a composition bias toward basic and acidic residues. Residues 640-652 (SATLSSTESTASE) are compositionally biased toward low complexity. Threonine 642 is modified (phosphothreonine). Phosphoserine occurs at positions 644, 645, 648, and 651. Positions 655-674 (EEMKGSVEEPKPEEPKRKVD) are enriched in basic and acidic residues. Serine 696, serine 697, and serine 698 each carry phosphoserine. Basic and acidic residues predominate over residues 708 to 724 (GGDHQKADEAGKDKETG). A compositionally biased stretch (polar residues) spans 739–749 (QGSSSPEQAGS). A phosphoserine mark is found at serine 749, serine 761, and serine 787. The AKAP CaM-binding 2 signature appears at 756 to 776 (VSTWESFKRLVTPRKKSKSKL). Over residues 792–803 (STPDTEPGKEES) the composition is skewed to basic and acidic residues. The short motif at 801–821 (EESWVSIKKFIPGRRKKRPDG) is the AKAP CaM-binding 3 element. Serine 806 carries the post-translational modification Phosphoserine. Residues 986-997 (GAEEGTEASAAE) are compositionally biased toward low complexity. A Glycyl lysine isopeptide (Lys-Gly) (interchain with G-Cter in SUMO1) cross-link involves residue lysine 1051. The segment covering 1072–1089 (AEAERPEEQAEASGLKKE) has biased composition (basic and acidic residues). A compositionally biased stretch (polar residues) spans 1164–1174 (ETPTDSETDGS). Composition is skewed to basic and acidic residues over residues 1187-1198 (QKDEIVEIHEEN) and 1231-1251 (EETK…KEVS). Positions 1253 to 1267 (ETVSILSKTEGTQEA) are enriched in polar residues. A phosphoserine mark is found at serine 1328 and serine 1331. A compositionally biased stretch (basic and acidic residues) spans 1333 to 1355 (VEREMVVQVEREKTEAEPTHVNE). Phosphoserine occurs at positions 1391 and 1395. The RII-binding stretch occupies residues 1541 to 1554 (ELETKSSKLVQNII). The tract at residues 1584-1782 (KADSQDAGQE…ESAKSELTES (199 aa)) is disordered. Serine 1587 is subject to Phosphoserine. A compositionally biased stretch (polar residues) spans 1603 to 1612 (ASAQDETPIT). 2 stretches are compositionally biased toward basic and acidic residues: residues 1629-1639 (DISKDMSEASE) and 1675-1699 (VPED…KEDE). Residue serine 1727 is modified to Phosphoserine. Composition is skewed to basic and acidic residues over residues 1734-1757 (KQKE…ESDK) and 1766-1782 (ELQK…LTES).

As to quaternary structure, binds to dimeric RII-alpha regulatory subunit of PKC. Expressed in endothelial cells, cultured fibroblasts and osteosarcoma, but not in platelets, leukocytes, monocytic cell lines or peripherical blood cells.

The protein resides in the cytoplasm. It is found in the cell cortex. It localises to the cytoskeleton. The protein localises to the membrane. Its function is as follows. Anchoring protein that mediates the subcellular compartmentation of protein kinase A (PKA) and protein kinase C (PKC). This chain is A-kinase anchor protein 12 (AKAP12), found in Homo sapiens (Human).